We begin with the raw amino-acid sequence, 462 residues long: 3-isopropylmalate dehydratase large subunit (462 aa).

Residues Cys-337, Cys-397, and Cys-400 each coordinate [4Fe-4S] cluster.

The protein belongs to the aconitase/IPM isomerase family. LeuC type 1 subfamily. As to quaternary structure, heterodimer of LeuC and LeuD. Requires [4Fe-4S] cluster as cofactor.

The enzyme catalyses (2R,3S)-3-isopropylmalate = (2S)-2-isopropylmalate. The protein operates within amino-acid biosynthesis; L-leucine biosynthesis; L-leucine from 3-methyl-2-oxobutanoate: step 2/4. Catalyzes the isomerization between 2-isopropylmalate and 3-isopropylmalate, via the formation of 2-isopropylmaleate. The polypeptide is 3-isopropylmalate dehydratase large subunit (Listeria monocytogenes serotype 4a (strain HCC23)).